The chain runs to 92 residues: Small ribosomal subunit protein uS19 (92 aa).

Belongs to the universal ribosomal protein uS19 family.

Functionally, protein S19 forms a complex with S13 that binds strongly to the 16S ribosomal RNA. The chain is Small ribosomal subunit protein uS19 from Roseobacter denitrificans (strain ATCC 33942 / OCh 114) (Erythrobacter sp. (strain OCh 114)).